The primary structure comprises 110 residues: Iron-sulfur cluster assembly protein CyaY (110 aa).

The protein belongs to the frataxin family.

In terms of biological role, involved in iron-sulfur (Fe-S) cluster assembly. May act as a regulator of Fe-S biogenesis. The chain is Iron-sulfur cluster assembly protein CyaY from Pseudomonas fluorescens (strain ATCC BAA-477 / NRRL B-23932 / Pf-5).